The primary structure comprises 154 residues: 17.7 kDa class I heat shock protein (154 aa).

A sHSP domain is found at 40 to 154 (ETSAFANTRI…PDVKSIEISG (115 aa)).

Belongs to the small heat shock protein (HSP20) family. Forms oligomeric structures.

It localises to the cytoplasm. In Solanum peruvianum (Peruvian tomato), this protein is 17.7 kDa class I heat shock protein.